Reading from the N-terminus, the 345-residue chain is Large ribosomal subunit protein uL4 (345 aa).

Alanine 2 bears the N-acetylalanine mark.

It belongs to the universal ribosomal protein uL4 family.

This is Large ribosomal subunit protein uL4 (rpl-4) from Caenorhabditis elegans.